We begin with the raw amino-acid sequence, 159 residues long: Stress-induced protein 1 (159 aa).

The 109-residue stretch at 33–141 folds into the sHSP domain; the sequence is NNFNNIVPQQ…TVRALPIHTS (109 aa).

The protein belongs to the small heat shock protein (HSP20) family.

This Caenorhabditis elegans protein is Stress-induced protein 1.